Reading from the N-terminus, the 440-residue chain is Glutamate--tRNA ligase 1 (440 aa).

The 'HIGH' region motif lies at 7–17 (PSPTGYLHVGN). The short motif at 238-242 (KISKR) is the 'KMSKS' region element. Residue K241 coordinates ATP.

The protein belongs to the class-I aminoacyl-tRNA synthetase family. Glutamate--tRNA ligase type 1 subfamily. In terms of assembly, monomer.

It is found in the cytoplasm. It carries out the reaction tRNA(Glu) + L-glutamate + ATP = L-glutamyl-tRNA(Glu) + AMP + diphosphate. In terms of biological role, catalyzes the attachment of glutamate to tRNA(Glu) in a two-step reaction: glutamate is first activated by ATP to form Glu-AMP and then transferred to the acceptor end of tRNA(Glu). The sequence is that of Glutamate--tRNA ligase 1 from Wolbachia sp. subsp. Brugia malayi (strain TRS).